The following is a 1427-amino-acid chain: A disintegrin and metalloproteinase with thrombospondin motifs 13 (1427 aa).

Positions 1–29 (MHQRHPRARCPPLCVAGILACGFLLGCWG) are cleaved as a signal peptide. Residues 30-74 (PSHFQQSCLQALEPQAVSSYLSPGAPLKGRPPSPGFQRQRQRQRR) constitute a propeptide that is removed on maturation. Positions 51-70 (SPGAPLKGRPPSPGFQRQRQ) are disordered. Residues 80–286 (LHLELLVAVG…GRARCVWDPP (207 aa)) enclose the Peptidase M12B domain. Glu-83 is a binding site for Ca(2+). Asn-142 and Asn-146 each carry an N-linked (GlcNAc...) asparagine glycan. Cystine bridges form between Cys-155–Cys-208, Cys-202–Cys-281, and Cys-242–Cys-265. Ca(2+)-binding residues include Asp-173, Asp-182, Glu-184, Asp-187, and Glu-212. Zn(2+) is bound at residue His-224. Glu-225 is an active-site residue. Residues His-228 and His-234 each coordinate Zn(2+). Positions 281 and 284 each coordinate Ca(2+). Residues 287 to 383 (RPQPGSAGHP…LVELTPIAAV (97 aa)) form the Disintegrin domain. 4 cysteine pairs are disulfide-bonded: Cys-311–Cys-337, Cys-322–Cys-347, Cys-332–Cys-366, and Cys-360–Cys-371. The 56-residue stretch at 384–439 (HGRWSSWGPRSPCSRSCGGGVVTRRRQCNNPRPAFGGRACVGADLQAEMCNTQACE) folds into the TSP type-1 1 domain. Trp-387 carries a C-linked (Man) tryptophan glycan. 8 disulfide bridges follow: Cys-396–Cys-433, Cys-400–Cys-438, Cys-411–Cys-423, Cys-450–Cys-487, Cys-483–Cys-522, Cys-508–Cys-527, Cys-532–Cys-548, and Cys-545–Cys-555. The O-linked (Fuc...) serine glycan is linked to Ser-399. A cysteine-rich region spans residues 440 to 556 (KTQLEFMSQQ…VCGGDNSTCS (117 aa)). The Cell attachment site signature appears at 498–500 (RGD). N-linked (GlcNAc...) asparagine glycosylation is found at Asn-552, Asn-579, and Asn-614. The tract at residues 556–685 (SPRKGSFTAG…TYFQPKPRQA (130 aa)) is spacer. Asn-667 carries an N-linked (GlcNAc...) (complex) asparagine glycan. 7 consecutive TSP type-1 domains span residues 682 to 730 (PRQA…SQQP), 742 to 805 (CPPY…QPCP), 808 to 859 (WEVS…PEPC), 896 to 950 (VWTP…QAVP), 951 to 1011 (CPAR…SLEP), 1012 to 1068 (CPPR…VPCL), and 1072 to 1131 (CTYR…GPCV). Ser-698 is a glycosylation site (O-linked (Fuc...) serine). N-linked (GlcNAc...) (complex) asparagine glycosylation occurs at Asn-707. Residue Ser-757 is glycosylated (O-linked (Fuc...) serine). The N-linked (GlcNAc...) asparagine glycan is linked to Asn-828. O-linked (Fuc...) serine glycosylation is found at Ser-907, Ser-965, Ser-1027, and Ser-1087. CUB domains are found at residues 1192-1298 (CGRQ…FYRE) and 1299-1427 (CDMQ…KEGT). N-linked (GlcNAc...) asparagine glycans are attached at residues Asn-1235 and Asn-1354.

Requires Zn(2+) as cofactor. Ca(2+) is required as a cofactor. Post-translationally, glycosylated. O-fucosylated by POFUT2 on a serine or a threonine residue found within the consensus sequence C1-X(2)-(S/T)-C2-G of the TSP type-1 repeat domains where C1 and C2 are the first and second cysteine residue of the repeat, respectively. Fucosylated repeats can then be further glycosylated by the addition of a beta-1,3-glucose residue by the glucosyltransferase, B3GALTL. Fucosylation mediates the efficient secretion of ADAMTS13. May also be C-glycosylated on tryptophan residues within the consensus sequence W-X-X-W of the TPRs, and also N-glycosylated. These other glycosylations can also facilitate secretion. In terms of processing, the precursor is processed by a furin endopeptidase which cleaves off the pro-domain. Plasma. Expressed primarily in liver.

It is found in the secreted. The catalysed reaction is The enzyme cleaves the von Willebrand factor at bond 842-Tyr-|-Met-843 within the A2 domain.. Zinc and calcium ions cooperatively modulate enzyme activity. The cleavage of the pro-domain is not required for protease activity. Dependence on calcium for proteolytic activity is mediated by the high affinity site. Its function is as follows. Cleaves the vWF multimers in plasma into smaller forms thereby controlling vWF-mediated platelet thrombus formation. In Homo sapiens (Human), this protein is A disintegrin and metalloproteinase with thrombospondin motifs 13 (ADAMTS13).